A 497-amino-acid polypeptide reads, in one-letter code: Hexokinase-1 (497 aa).

A helical membrane pass occupies residues 4–24 (ATVGAAVIGAATVCAVAALIV). Residues 35 to 487 (ARAMAILREF…SGIGAALLAA (453 aa)) enclose the Hexokinase domain. The segment at 90–228 (TGDEAGVFYA…GVDMRVSALV (139 aa)) is hexokinase small subdomain. Residues G104, T105, and N106 each coordinate ADP. Residues T194, K195, N229, and D230 each coordinate D-glucose. The interval 229 to 476 (NDTVGTLAGG…TSIVFEHSND (248 aa)) is hexokinase large subdomain. T253 serves as a coordination point for ADP. Positions 256, 284, and 315 each coordinate D-glucose. G441 is a binding site for ADP.

Belongs to the hexokinase family.

The protein resides in the plastid. It is found in the chloroplast outer membrane. It catalyses the reaction a D-hexose + ATP = a D-hexose 6-phosphate + ADP + H(+). The enzyme catalyses D-fructose + ATP = D-fructose 6-phosphate + ADP + H(+). It carries out the reaction D-glucose + ATP = D-glucose 6-phosphate + ADP + H(+). The protein operates within carbohydrate metabolism; hexose metabolism. Its pathway is carbohydrate degradation; glycolysis; D-glyceraldehyde 3-phosphate and glycerone phosphate from D-glucose: step 1/4. In terms of biological role, fructose and glucose phosphorylating enzyme. The sequence is that of Hexokinase-1 (HXK1) from Nicotiana tabacum (Common tobacco).